The sequence spans 459 residues: Bifunctional protein GlmU (459 aa).

A pyrophosphorylase region spans residues 1–230 (MSNRFAVILA…FDETLGVNDR (230 aa)). Residues 9 to 12 (LAAG), Lys-23, Gln-73, and 78 to 79 (GT) each bind UDP-N-acetyl-alpha-D-glucosamine. Asp-103 is a binding site for Mg(2+). Residues Gly-140, Glu-155, Asn-170, and Asn-228 each coordinate UDP-N-acetyl-alpha-D-glucosamine. Asn-228 serves as a coordination point for Mg(2+). Positions 231–251 (VALSQAEIIMKNRINRKNMVN) are linker. The tract at residues 252 to 459 (GVTIIDPSNT…VDQLLNKKKS (208 aa)) is N-acetyltransferase. UDP-N-acetyl-alpha-D-glucosamine contacts are provided by Arg-333 and Lys-351. The Proton acceptor role is filled by His-363. Residues Tyr-366 and Asn-377 each contribute to the UDP-N-acetyl-alpha-D-glucosamine site. Acetyl-CoA contacts are provided by residues 386 to 387 (NY), Ala-423, and Arg-440.

This sequence in the N-terminal section; belongs to the N-acetylglucosamine-1-phosphate uridyltransferase family. It in the C-terminal section; belongs to the transferase hexapeptide repeat family. As to quaternary structure, homotrimer. It depends on Mg(2+) as a cofactor.

It localises to the cytoplasm. The enzyme catalyses alpha-D-glucosamine 1-phosphate + acetyl-CoA = N-acetyl-alpha-D-glucosamine 1-phosphate + CoA + H(+). The catalysed reaction is N-acetyl-alpha-D-glucosamine 1-phosphate + UTP + H(+) = UDP-N-acetyl-alpha-D-glucosamine + diphosphate. It functions in the pathway nucleotide-sugar biosynthesis; UDP-N-acetyl-alpha-D-glucosamine biosynthesis; N-acetyl-alpha-D-glucosamine 1-phosphate from alpha-D-glucosamine 6-phosphate (route II): step 2/2. It participates in nucleotide-sugar biosynthesis; UDP-N-acetyl-alpha-D-glucosamine biosynthesis; UDP-N-acetyl-alpha-D-glucosamine from N-acetyl-alpha-D-glucosamine 1-phosphate: step 1/1. The protein operates within bacterial outer membrane biogenesis; LPS lipid A biosynthesis. Its function is as follows. Catalyzes the last two sequential reactions in the de novo biosynthetic pathway for UDP-N-acetylglucosamine (UDP-GlcNAc). The C-terminal domain catalyzes the transfer of acetyl group from acetyl coenzyme A to glucosamine-1-phosphate (GlcN-1-P) to produce N-acetylglucosamine-1-phosphate (GlcNAc-1-P), which is converted into UDP-GlcNAc by the transfer of uridine 5-monophosphate (from uridine 5-triphosphate), a reaction catalyzed by the N-terminal domain. This chain is Bifunctional protein GlmU, found in Bacillus cereus (strain G9842).